The sequence spans 350 residues: Probable 2-dehydropantoate 2-reductase (350 aa).

Residues 9-14 and N115 contribute to the NADP(+) site; that span reads GAGSIG. N115 contacts substrate. The active-site Proton donor is K213. Positions 217, 221, and 295 each coordinate substrate. E307 contacts NADP(+).

It belongs to the ketopantoate reductase family.

It carries out the reaction (R)-pantoate + NADP(+) = 2-dehydropantoate + NADPH + H(+). It functions in the pathway cofactor biosynthesis; (R)-pantothenate biosynthesis; (R)-pantoate from 3-methyl-2-oxobutanoate: step 2/2. Its function is as follows. Catalyzes the NADPH-dependent reduction of ketopantoate into pantoic acid. In Schizosaccharomyces pombe (strain 972 / ATCC 24843) (Fission yeast), this protein is Probable 2-dehydropantoate 2-reductase.